Here is a 221-residue protein sequence, read N- to C-terminus: GTP cyclohydrolase III (221 aa).

Belongs to the archaeal-type GTP cyclohydrolase family.

It catalyses the reaction GTP + 3 H2O = 2-amino-5-formylamino-6-(5-phospho-D-ribosylamino)pyrimidin-4(3H)-one + 2 phosphate + 2 H(+). Its function is as follows. Catalyzes the formation of 2-amino-5-formylamino-6-ribofuranosylamino-4(3H)-pyrimidinone ribonucleotide monophosphate and inorganic phosphate from GTP. Also has an independent pyrophosphate phosphohydrolase activity. This is GTP cyclohydrolase III from Pyrobaculum aerophilum (strain ATCC 51768 / DSM 7523 / JCM 9630 / CIP 104966 / NBRC 100827 / IM2).